A 382-amino-acid polypeptide reads, in one-letter code: Galactokinase (382 aa).

34 to 37 (EHTD) is a binding site for substrate. 124–130 (GAGLSSS) is a binding site for ATP. Mg(2+) is bound by residues S130 and E162. The Proton acceptor role is filled by D174. Y223 contacts substrate.

Belongs to the GHMP kinase family. GalK subfamily.

It localises to the cytoplasm. The enzyme catalyses alpha-D-galactose + ATP = alpha-D-galactose 1-phosphate + ADP + H(+). It functions in the pathway carbohydrate metabolism; galactose metabolism. Functionally, catalyzes the transfer of the gamma-phosphate of ATP to D-galactose to form alpha-D-galactose-1-phosphate (Gal-1-P). The protein is Galactokinase of Aeromonas hydrophila subsp. hydrophila (strain ATCC 7966 / DSM 30187 / BCRC 13018 / CCUG 14551 / JCM 1027 / KCTC 2358 / NCIMB 9240 / NCTC 8049).